The chain runs to 105 residues: uncharacterized protein (105 aa).

The protein resides in the cytoplasm. It localises to the nucleus. This is an uncharacterized protein from Schizosaccharomyces pombe (strain 972 / ATCC 24843) (Fission yeast).